A 117-amino-acid polypeptide reads, in one-letter code: Large ribosomal subunit protein bL20c (117 aa).

The protein belongs to the bacterial ribosomal protein bL20 family.

Its subcellular location is the plastid. It localises to the chloroplast. Functionally, binds directly to 23S ribosomal RNA and is necessary for the in vitro assembly process of the 50S ribosomal subunit. It is not involved in the protein synthesizing functions of that subunit. The sequence is that of Large ribosomal subunit protein bL20c from Barbarea verna (Land cress).